The chain runs to 269 residues: Probable molybdenum ABC transporter permease protein HVO_B0370 (269 aa).

Transmembrane regions (helical) follow at residues 26 to 46 (LLLAGVLLLYYLLPIGALVFA), 69 to 89 (VVAATLSTLVAVAFGVPLAYW), 100 to 120 (VILALVMLPLVLPPVVSGMLL), 140 to 160 (SLFGVVLAQTYVASPFLVVTA), 198 to 218 (ILAGVTLTFARAIGEFGATLM), and 243 to 263 (FPVALVLVGIAVGAILLVHAL). The 194-residue stretch at 65-258 (ATNSVVAATL…LVGIAVGAIL (194 aa)) folds into the ABC transmembrane type-1 domain.

Belongs to the binding-protein-dependent transport system permease family. The complex is composed of two ATP-binding proteins, two transmembrane proteins (HVO_B0370) and a solute-binding protein (HVO_B0369).

The protein resides in the cell membrane. In terms of biological role, part of an ABC transporter complex involved in molybdenum import. Responsible for the translocation of the substrate across the membrane. This chain is Probable molybdenum ABC transporter permease protein HVO_B0370, found in Haloferax volcanii (strain ATCC 29605 / DSM 3757 / JCM 8879 / NBRC 14742 / NCIMB 2012 / VKM B-1768 / DS2) (Halobacterium volcanii).